We begin with the raw amino-acid sequence, 278 residues long: Putative B3 domain-containing protein At2g21920 (278 aa).

A DNA-binding region (TF-B3) is located at residues 168–275; sequence ISKTLSRTDV…KFIILNFEYN (108 aa).

The protein resides in the nucleus. The protein is Putative B3 domain-containing protein At2g21920 of Arabidopsis thaliana (Mouse-ear cress).